We begin with the raw amino-acid sequence, 500 residues long: Phosphatidylserine decarboxylase proenzyme 1, mitochondrial (500 aa).

Residues Met-1–Leu-48 constitute a mitochondrion; not cleaved when targeted to the endoplasmic reticulum transit peptide. Residue Asn-34 is glycosylated (N-linked (GlcNAc...) asparagine). The Mitochondrial matrix segment spans residues Ser-45 to Trp-79. Positions Gly-57 to Thr-101 are enables targeting to the endoplasmic reticulum in addition to mitochondria. Residues Val-80–Asn-98 traverse the membrane as a helical segment. At Asp-99–Lys-500 the chain is on the mitochondrial intermembrane side. Residues Asp-210, His-348, and Ser-463 each act as charge relay system; for autoendoproteolytic cleavage activity in the active site. Residue Ser-463 is the Schiff-base intermediate with substrate; via pyruvic acid; for decarboxylase activity of the active site. Ser-463 is modified (pyruvic acid (Ser); by autocatalysis). The tract at residues Phe-475–Gly-492 is required for processing and stability.

This sequence belongs to the phosphatidylserine decarboxylase family. PSD-B subfamily. Eukaryotic type I sub-subfamily. Heterodimer of a large membrane-associated beta subunit and a small pyruvoyl-containing alpha subunit. Requires pyruvate as cofactor. Glycosylated at Asn-34 in the endoplasmic reticulum. In terms of processing, the precursor is imported via the TOM complex into mitochondria, where the N-terminal presequence is cleaved by the matrix-located proteases MPP (MAS1-MAS2) and OCT1. Post-translationally, is synthesized initially as an inactive proenzyme. Formation of the active enzyme involves a self-maturation process in which the active site pyruvoyl group is generated from an internal serine residue via an autocatalytic post-translational modification. Two non-identical subunits are generated from the proenzyme in this reaction, and the pyruvate is formed at the N-terminus of the alpha chain, which is derived from the carboxyl end of the proenzyme. The autoendoproteolytic cleavage occurs by a canonical serine protease mechanism, in which the side chain hydroxyl group of the serine supplies its oxygen atom to form the C-terminus of the beta chain, while the remainder of the serine residue undergoes an oxidative deamination to produce ammonia and the pyruvoyl prosthetic group on the alpha chain. During this reaction, the Ser that is part of the protease active site of the proenzyme becomes the pyruvoyl prosthetic group, which constitutes an essential element of the active site of the mature decarboxylase.

Its subcellular location is the mitochondrion inner membrane. The protein resides in the lipid droplet. The protein localises to the endoplasmic reticulum membrane. It carries out the reaction a 1,2-diacyl-sn-glycero-3-phospho-L-serine + H(+) = a 1,2-diacyl-sn-glycero-3-phosphoethanolamine + CO2. It functions in the pathway phospholipid metabolism; phosphatidylethanolamine biosynthesis; phosphatidylethanolamine from CDP-diacylglycerol: step 2/2. Functionally, catalyzes the formation of phosphatidylethanolamine (PtdEtn) from phosphatidylserine (PtdSer). Plays a central role in phospholipid metabolism and in the interorganelle trafficking of phosphatidylserine. Phosphatidylethanolamine formed in the mitochondria is exported to other membranes to fullfill their requirements for PtdEtn. Required for normal mitochondrial morphology and proper mitochondrial fusion during yeast mating. Involved in lipid droplet biogenesis at the endoplasmic reticulum membrane. Required for induction of mitophagy during nitrogen starvation. Appears to play a specific role in supporting respiratory complex III activity. The sequence is that of Phosphatidylserine decarboxylase proenzyme 1, mitochondrial from Saccharomyces cerevisiae (strain ATCC 204508 / S288c) (Baker's yeast).